The primary structure comprises 321 residues: UDP-N-acetyl-alpha-D-glucosaminuronate decarboxylase (321 aa).

Residues Gly12, Phe13, Ile14, Asp33, Asn34, Tyr36, Gly38, Leu76, Thr95, Ala117, Tyr148, and Lys152 each coordinate NAD(+). The active-site Proton acceptor is Tyr148.

The protein belongs to the NAD(P)-dependent epimerase/dehydratase family. As to quaternary structure, homodimer. NAD(+) is required as a cofactor.

It carries out the reaction UDP-2-acetamido-2-deoxy-alpha-D-glucuronate + H(+) = UDP-N-acetyl-alpha-D-xylosamine + CO2. With respect to regulation, activity is completely inhibited by NADH but not by NADPH. Functionally, decarboxylase involved in the biosynthesis of the nucleotide-sugar UDP-N-acetylxylosamine (UDP-XylNAc). Catalyzes the NAD-dependent decarboxylation of UDP-N-acetylglucosaminuronic acid (UDP-GlcNAcA) to UDP-XylNAc. Cannot use other UDP-uronates, such as UDP-glucuronic acid (UDP-GlcA) and UDP-galacturonic acid (UDP-GalA). The polypeptide is UDP-N-acetyl-alpha-D-glucosaminuronate decarboxylase (Bacillus cytotoxicus (strain DSM 22905 / CIP 110041 / 391-98 / NVH 391-98)).